The chain runs to 270 residues: Putative F-box protein At3g24700 (270 aa).

Residues 1–45 (MLTDLPLDLESEILSRVPATSLQRLKTTCKRWYALFRDPRFVKKN) enclose the F-box domain.

This chain is Putative F-box protein At3g24700, found in Arabidopsis thaliana (Mouse-ear cress).